The sequence spans 548 residues: Membrane protein insertase YidC (548 aa).

A helical transmembrane segment spans residues 6 to 26; it reads NLLVIALLFVSFMIWQAWEQD. The tract at residues 28 to 54 is disordered; that stretch reads NPQPQTQQTTQTTTTAAGSAADQGVPA. The segment covering 29–42 has biased composition (low complexity); the sequence is PQPQTQQTTQTTTT. A run of 4 helical transmembrane segments spans residues 350-370, 424-444, 458-478, and 499-519; these read FLGN…GIMY, FPLI…MGSI, LSAQ…MFFI, and PVIF…YYIV.

The protein belongs to the OXA1/ALB3/YidC family. Type 1 subfamily. In terms of assembly, interacts with the Sec translocase complex via SecD. Specifically interacts with transmembrane segments of nascent integral membrane proteins during membrane integration.

The protein localises to the cell inner membrane. Functionally, required for the insertion and/or proper folding and/or complex formation of integral membrane proteins into the membrane. Involved in integration of membrane proteins that insert both dependently and independently of the Sec translocase complex, as well as at least some lipoproteins. Aids folding of multispanning membrane proteins. In Citrobacter koseri (strain ATCC BAA-895 / CDC 4225-83 / SGSC4696), this protein is Membrane protein insertase YidC.